We begin with the raw amino-acid sequence, 405 residues long: Tryptophan synthase beta chain (405 aa).

An N6-(pyridoxal phosphate)lysine modification is found at Lys95.

It belongs to the TrpB family. In terms of assembly, tetramer of two alpha and two beta chains. Pyridoxal 5'-phosphate is required as a cofactor.

It catalyses the reaction (1S,2R)-1-C-(indol-3-yl)glycerol 3-phosphate + L-serine = D-glyceraldehyde 3-phosphate + L-tryptophan + H2O. It participates in amino-acid biosynthesis; L-tryptophan biosynthesis; L-tryptophan from chorismate: step 5/5. The beta subunit is responsible for the synthesis of L-tryptophan from indole and L-serine. This chain is Tryptophan synthase beta chain, found in Pseudomonas putida (strain GB-1).